The primary structure comprises 290 residues: Ribosomal RNA small subunit methyltransferase A (290 aa).

S-adenosyl-L-methionine-binding residues include N27, L29, G54, E75, D100, and N125.

Belongs to the class I-like SAM-binding methyltransferase superfamily. rRNA adenine N(6)-methyltransferase family. RsmA subfamily.

The protein localises to the cytoplasm. The catalysed reaction is adenosine(1518)/adenosine(1519) in 16S rRNA + 4 S-adenosyl-L-methionine = N(6)-dimethyladenosine(1518)/N(6)-dimethyladenosine(1519) in 16S rRNA + 4 S-adenosyl-L-homocysteine + 4 H(+). Its function is as follows. Specifically dimethylates two adjacent adenosines (A1518 and A1519) in the loop of a conserved hairpin near the 3'-end of 16S rRNA in the 30S particle. May play a critical role in biogenesis of 30S subunits. This is Ribosomal RNA small subunit methyltransferase A from Streptococcus pneumoniae (strain ATCC 700669 / Spain 23F-1).